Reading from the N-terminus, the 267-residue chain is 4-hydroxy-tetrahydrodipicolinate reductase (267 aa).

NAD(+)-binding positions include 8 to 13 (GAAGRM) and Asp34. Position 35 (Arg35) interacts with NADP(+). NAD(+) is bound by residues 98–100 (GTT) and 122–125 (AANF). The active-site Proton donor/acceptor is the His155. His156 serves as a coordination point for (S)-2,3,4,5-tetrahydrodipicolinate. Lys159 (proton donor) is an active-site residue. 165-166 (GT) is a binding site for (S)-2,3,4,5-tetrahydrodipicolinate.

Belongs to the DapB family.

It localises to the cytoplasm. It carries out the reaction (S)-2,3,4,5-tetrahydrodipicolinate + NAD(+) + H2O = (2S,4S)-4-hydroxy-2,3,4,5-tetrahydrodipicolinate + NADH + H(+). The enzyme catalyses (S)-2,3,4,5-tetrahydrodipicolinate + NADP(+) + H2O = (2S,4S)-4-hydroxy-2,3,4,5-tetrahydrodipicolinate + NADPH + H(+). Its pathway is amino-acid biosynthesis; L-lysine biosynthesis via DAP pathway; (S)-tetrahydrodipicolinate from L-aspartate: step 4/4. Its function is as follows. Catalyzes the conversion of 4-hydroxy-tetrahydrodipicolinate (HTPA) to tetrahydrodipicolinate. The sequence is that of 4-hydroxy-tetrahydrodipicolinate reductase from Pseudomonas putida (strain W619).